A 130-amino-acid chain; its full sequence is Small ribosomal subunit protein uS9 (130 aa).

Belongs to the universal ribosomal protein uS9 family.

The polypeptide is Small ribosomal subunit protein uS9 (Chromobacterium violaceum (strain ATCC 12472 / DSM 30191 / JCM 1249 / CCUG 213 / NBRC 12614 / NCIMB 9131 / NCTC 9757 / MK)).